We begin with the raw amino-acid sequence, 248 residues long: MKSSTQAVLEHTAIPKHIAVIMDGNGRWAKKRFLPRIMGHKRGLDALENMVKHCAKLGVQYLTVFAFSTENWRRPEDEVSFLMGLFLQALQKQVRRLHENNMRLKILGSRERFNRQILKGIEEAEALTANNTGLTLSIAADYGGRWDILQAANKLIAEGVSEITEDTLAKYLMLGDAPEPDLFIRTGGETRISNFLLWQMAYAELYFTDILWPDFDGKALDDAVASFQKRERRFGRTSEQLPIEQQRN.

Asp23 is a catalytic residue. Residue Asp23 participates in Mg(2+) binding. Substrate is bound by residues 24 to 27 (GNGR), Trp28, Arg36, His40, and 68 to 70 (STE). The active-site Proton acceptor is Asn71. Residues Trp72, Arg74, Arg185, and 191–193 (RIS) contribute to the substrate site. Glu204 serves as a coordination point for Mg(2+).

Belongs to the UPP synthase family. As to quaternary structure, homodimer. Mg(2+) serves as cofactor.

Functionally, catalyzes the condensation of isopentenyl diphosphate (IPP) with allylic pyrophosphates generating different type of terpenoids. This chain is Isoprenyl transferase, found in Neisseria meningitidis serogroup A / serotype 4A (strain DSM 15465 / Z2491).